Here is a 611-residue protein sequence, read N- to C-terminus: Protein ral2 (611 aa).

Kelch repeat units follow at residues 43–91 (EAFV…HSGD), 96–149 (KLIF…EVNG), and 175–224 (YLII…VINK). Phosphoserine is present on serine 604.

Essential for mating and for recognition of the mating pheromone, and for the determination of cell shape. Implicated in activation of the ras1 protein. The chain is Protein ral2 (ral2) from Schizosaccharomyces pombe (strain 972 / ATCC 24843) (Fission yeast).